The primary structure comprises 354 residues: Ferrochelatase (354 aa).

Fe cation-binding residues include H204 and E306.

Belongs to the ferrochelatase family.

Its subcellular location is the cytoplasm. It carries out the reaction heme b + 2 H(+) = protoporphyrin IX + Fe(2+). It functions in the pathway porphyrin-containing compound metabolism; protoheme biosynthesis; protoheme from protoporphyrin-IX: step 1/1. Its function is as follows. Catalyzes the ferrous insertion into protoporphyrin IX. The chain is Ferrochelatase from Coxiella burnetii (strain CbuG_Q212) (Coxiella burnetii (strain Q212)).